The primary structure comprises 279 residues: Threonylcarbamoyl-AMP synthase (279 aa).

The transit peptide at 1 to 55 (MSPARRCRGMRAAVAASVGLSEGPAGSRSGRLFRPPSPAPAAPGARLLRLPGSGA) directs the protein to the mitochondrion. Residues 21-41 (SEGPAGSRSGRLFRPPSPAPA) form a disordered region. Ser60 is modified (phosphoserine). The YrdC-like domain maps to 67-257 (TEALRAAVAE…KFGIIRPGCA (191 aa)).

Belongs to the SUA5 family. As to quaternary structure, interacts with RSC1A1. Ubiquitously expressed.

Its subcellular location is the cytoplasm. The protein localises to the mitochondrion. It is found in the cell membrane. It carries out the reaction L-threonine + hydrogencarbonate + ATP = L-threonylcarbamoyladenylate + diphosphate + H2O. In terms of biological role, cytoplasmic and mitochondrial threonylcarbamoyl-AMP synthase required for the formation of a threonylcarbamoyl group on adenosine at position 37 (t(6)A37) in tRNAs that read codons beginning with adenine. Catalyzes the conversion of L-threonine, HCO(3)(-)/CO(2) and ATP to give threonylcarbamoyl-AMP (TC-AMP) as the acyladenylate intermediate, with the release of diphosphate. Participates in t(6)A37 formation in cytoplasmic and mitochondrial tRNAs. May regulate the activity of some transporters. This Homo sapiens (Human) protein is Threonylcarbamoyl-AMP synthase.